The chain runs to 291 residues: Basic helix-loop-helix protein 80 (291 aa).

A disordered region spans residues 65 to 120; sequence SAVLDTSPSVDRKRKAAEDSAHSKDSCKDGKSRRGKKASKEVEEKSTTEDEPPKGY. The segment covering 80–117 has biased composition (basic and acidic residues); that stretch reads AAEDSAHSKDSCKDGKSRRGKKASKEVEEKSTTEDEPP. The Nuclear localization signal signature appears at 125-132; sequence ARRGQATD. Residues 129–142 form a basic motif; degenerate region; that stretch reads QATDSHSLAERVRR. Residues 129 to 179 form the bHLH domain; that stretch reads QATDSHSLAERVRRERISERMRMLQALVPGCDKVTGKALILDEIINYVQSL. The helix-loop-helix motif stretch occupies residues 143–179; the sequence is ERISERMRMLQALVPGCDKVTGKALILDEIINYVQSL.

This sequence belongs to the bHLH protein family. As to quaternary structure, homodimer. Interacts with IBH1, BC1 and LO9-177.

It is found in the nucleus. Functionally, together with BCL2, positive regulator of cell elongation at least partially through increased gibberellic acid (GA) biosynthesis. The chain is Basic helix-loop-helix protein 80 from Oryza sativa subsp. indica (Rice).